We begin with the raw amino-acid sequence, 467 residues long: MNTVRSEKDSMGAIDVPADKLWGAQTQRSLEHFRISTEKMPTSLIHALALTKRAAAKVNEDLGLLSEEKASAIRQAADEVLAGQHDDEFPLAIWQTGSGTQSNMNMNEVLANRASELLGGVRGMERKVHPNDDVNKSQSSNDVFPTAMHVAALLALRKQLIPQLKTLTQTLSEKSRAFADIVKIGRTHLQDATPLTLGQEISGWVAMLEHNLKHIEYSLPHVAELALGGTAVGTGLNTHPEYARRVADELAVITCAPFVTAPNKFEALATCDALVQAHGALKGLAASLMKIANDVRWLASGPRCGIGEISIPENEPGSSIMPGKVNPTQCEALTMLCCQVMGNDVAINMGGASGNFELNVFRPMVIHNFLQSVRLLADGMESFNKHCAVGIEPNRERINQLLNESLMLVTALNTHIGYDKAAEIAKKAHKEGLTLKAAALALGYLSEAEFDRWVRPEQMVGSMKAGG.

Residues 98 to 100, Arg126, 129 to 132, 139 to 141, and Thr187 each bind substrate; these read SGT, HPND, and SSN. Residue His188 is the Proton donor/acceptor of the active site. Ser318 is an active-site residue. Substrate contacts are provided by residues Ser319 and 324–326; that span reads KVN.

The protein belongs to the class-II fumarase/aspartase family. Fumarase subfamily. In terms of assembly, homotetramer.

Its subcellular location is the cytoplasm. It catalyses the reaction (S)-malate = fumarate + H2O. It functions in the pathway carbohydrate metabolism; tricarboxylic acid cycle; (S)-malate from fumarate: step 1/1. In terms of biological role, involved in the TCA cycle. Catalyzes the stereospecific interconversion of fumarate to L-malate. This Escherichia coli O6:H1 (strain CFT073 / ATCC 700928 / UPEC) protein is Fumarate hydratase class II.